We begin with the raw amino-acid sequence, 210 residues long: Uridine kinase P10 (210 aa).

Residue 10 to 18 (GISGSGKST) coordinates ATP. Asp41 is a catalytic residue.

Belongs to the uridine kinase family. As to quaternary structure, interacts with host eIF-2B; this interaction disrupts the interaction between eIF2 and eIF-2B, which leads to the inhibition of stress granules formation.

Its subcellular location is the host cytoplasm. The protein resides in the host perinuclear region. It carries out the reaction uridine + ATP = UMP + ADP + H(+). Its function is as follows. Inhibits the integrated stress response (ISR) in the infected cell by preventing the sequestration of eIF2B by phosphorylated EIF2S1/eIF-2alpha. Stress granule formation in response to EIF2S1/eIF-2alpha phosphorylation is thus inhibited, which allows protein synthesis and viral replication. Phosphorylates uridine to uridine monophosphate. This Beluga whale coronavirus (strain SW1) (BwCoV) protein is Uridine kinase P10 (ORF10).